The primary structure comprises 171 residues: Shikimate kinase (171 aa).

Residue 13-18 (GVGKST) coordinates ATP. Ser17 lines the Mg(2+) pocket. Substrate contacts are provided by Asp35, Arg59, and Gly81. Arg118 provides a ligand contact to ATP. Arg136 lines the substrate pocket. Residue Arg153 participates in ATP binding.

The protein belongs to the shikimate kinase family. Monomer. It depends on Mg(2+) as a cofactor.

The protein localises to the cytoplasm. The enzyme catalyses shikimate + ATP = 3-phosphoshikimate + ADP + H(+). The protein operates within metabolic intermediate biosynthesis; chorismate biosynthesis; chorismate from D-erythrose 4-phosphate and phosphoenolpyruvate: step 5/7. Catalyzes the specific phosphorylation of the 3-hydroxyl group of shikimic acid using ATP as a cosubstrate. This chain is Shikimate kinase, found in Streptomyces coelicolor (strain ATCC BAA-471 / A3(2) / M145).